A 460-amino-acid chain; its full sequence is Ribosomal protein uS12 methylthiotransferase RimO (460 aa).

The MTTase N-terminal domain maps to 9–119 (PKVGFVSLGC…VMEAVHAALP (111 aa)). Positions 18, 54, 83, 150, 154, and 157 each coordinate [4Fe-4S] cluster. One can recognise a Radical SAM core domain in the interval 136–374 (LTPRHYAYLK…AKQAEISALR (239 aa)). One can recognise a TRAM domain in the interval 376–444 (EAKIGSVQQC…EHDLFGDALP (69 aa)).

Belongs to the methylthiotransferase family. RimO subfamily. [4Fe-4S] cluster serves as cofactor.

It localises to the cytoplasm. The catalysed reaction is L-aspartate(89)-[ribosomal protein uS12]-hydrogen + (sulfur carrier)-SH + AH2 + 2 S-adenosyl-L-methionine = 3-methylsulfanyl-L-aspartate(89)-[ribosomal protein uS12]-hydrogen + (sulfur carrier)-H + 5'-deoxyadenosine + L-methionine + A + S-adenosyl-L-homocysteine + 2 H(+). Functionally, catalyzes the methylthiolation of an aspartic acid residue of ribosomal protein uS12. The polypeptide is Ribosomal protein uS12 methylthiotransferase RimO (Xanthomonas oryzae pv. oryzae (strain PXO99A)).